The primary structure comprises 48 residues: uncharacterized protein (48 aa).

A helical transmembrane segment spans residues 18 to 38 (IIIKYWYIDLTITIFAFLILY).

The protein localises to the host membrane. This is an uncharacterized protein from Acidianus bottle-shaped virus (isolate Italy/Pozzuoli) (ABV).